A 53-amino-acid polypeptide reads, in one-letter code: MFRWGIIFLIIALIAAALGFGGLAGTAAWAAKVVFVVGIILFLISLFTGRKRL.

2 consecutive transmembrane segments (helical) span residues 4–24 (WGIIFLIIALIAAALGFGGLA) and 27–47 (AAWAAKVVFVVGIILFLISLF).

Belongs to the UPF0391 family.

It localises to the cell membrane. In Yersinia pseudotuberculosis serotype IB (strain PB1/+), this protein is UPF0391 membrane protein YPTS_0599.